Here is a 269-residue protein sequence, read N- to C-terminus: Monofunctional glycosyltransferase (269 aa).

A helical membrane pass occupies residues 46-66 (ILLTILIIIALFIGIMYFLST).

The protein belongs to the glycosyltransferase 51 family.

The protein localises to the cell membrane. It carries out the reaction [GlcNAc-(1-&gt;4)-Mur2Ac(oyl-L-Ala-gamma-D-Glu-L-Lys-D-Ala-D-Ala)](n)-di-trans,octa-cis-undecaprenyl diphosphate + beta-D-GlcNAc-(1-&gt;4)-Mur2Ac(oyl-L-Ala-gamma-D-Glu-L-Lys-D-Ala-D-Ala)-di-trans,octa-cis-undecaprenyl diphosphate = [GlcNAc-(1-&gt;4)-Mur2Ac(oyl-L-Ala-gamma-D-Glu-L-Lys-D-Ala-D-Ala)](n+1)-di-trans,octa-cis-undecaprenyl diphosphate + di-trans,octa-cis-undecaprenyl diphosphate + H(+). The protein operates within cell wall biogenesis; peptidoglycan biosynthesis. Its function is as follows. Peptidoglycan polymerase that catalyzes glycan chain elongation using lipid-linked disaccharide-pentapeptide as the substrate. The protein is Monofunctional glycosyltransferase of Staphylococcus aureus (strain JH1).